Reading from the N-terminus, the 271-residue chain is 3-methyl-2-oxobutanoate hydroxymethyltransferase 2 (271 aa).

D53 and D92 together coordinate Mg(2+). 3-methyl-2-oxobutanoate is bound by residues 53-54 (DS), D92, and K120. Residue E122 participates in Mg(2+) binding. E189 (proton acceptor) is an active-site residue.

This sequence belongs to the PanB family. As to quaternary structure, homodecamer; pentamer of dimers. It depends on Mg(2+) as a cofactor.

The protein localises to the cytoplasm. The enzyme catalyses 3-methyl-2-oxobutanoate + (6R)-5,10-methylene-5,6,7,8-tetrahydrofolate + H2O = 2-dehydropantoate + (6S)-5,6,7,8-tetrahydrofolate. Its pathway is cofactor biosynthesis; (R)-pantothenate biosynthesis; (R)-pantoate from 3-methyl-2-oxobutanoate: step 1/2. Catalyzes the reversible reaction in which hydroxymethyl group from 5,10-methylenetetrahydrofolate is transferred onto alpha-ketoisovalerate to form ketopantoate. This Burkholderia lata (strain ATCC 17760 / DSM 23089 / LMG 22485 / NCIMB 9086 / R18194 / 383) protein is 3-methyl-2-oxobutanoate hydroxymethyltransferase 2.